Reading from the N-terminus, the 94-residue chain is Co-chaperonin GroES (94 aa).

This sequence belongs to the GroES chaperonin family. In terms of assembly, heptamer of 7 subunits arranged in a ring. Interacts with the chaperonin GroEL.

The protein localises to the cytoplasm. Its function is as follows. Together with the chaperonin GroEL, plays an essential role in assisting protein folding. The GroEL-GroES system forms a nano-cage that allows encapsulation of the non-native substrate proteins and provides a physical environment optimized to promote and accelerate protein folding. GroES binds to the apical surface of the GroEL ring, thereby capping the opening of the GroEL channel. The polypeptide is Co-chaperonin GroES (Limosilactobacillus reuteri (strain DSM 20016) (Lactobacillus reuteri)).